We begin with the raw amino-acid sequence, 460 residues long: Elongation factor 1-alpha (460 aa).

Gly-2 is subject to N,N,N-trimethylglycine. Position 3 is an N6,N6-dimethyllysine; alternate (Lys-3). N6-methyllysine; alternate is present on Lys-3. One can recognise a tr-type G domain in the interval 6 to 241; the sequence is KTHINVVVIG…DAIEPPKRPT (236 aa). The G1 stretch occupies residues 15-22; the sequence is GHVDSGKS. A GTP-binding site is contributed by 15-22; it reads GHVDSGKS. An N6-methyllysine modification is found at Lys-31. Residues 71–75 are G2; that stretch reads GITID. Lys-80 bears the N6,N6,N6-trimethyllysine mark. Positions 92–95 are G3; that stretch reads DAPG. Residues 92-96 and 154-157 each bind GTP; these read DAPGH and NKMD. The segment at 154–157 is G4; the sequence is NKMD. The G5 stretch occupies residues 193 to 195; sequence SGF. Lys-317 carries the post-translational modification N6,N6-dimethyllysine; alternate. At Lys-317 the chain carries N6-methyllysine; alternate. N6-methyllysine is present on Lys-391.

Belongs to the TRAFAC class translation factor GTPase superfamily. Classic translation factor GTPase family. EF-Tu/EF-1A subfamily.

The protein resides in the cytoplasm. Functionally, this protein promotes the GTP-dependent binding of aminoacyl-tRNA to the A-site of ribosomes during protein biosynthesis. The protein is Elongation factor 1-alpha (tef-1) of Neurospora crassa (strain ATCC 24698 / 74-OR23-1A / CBS 708.71 / DSM 1257 / FGSC 987).